The following is a 452-amino-acid chain: Probable multidrug resistance protein NorM (452 aa).

12 helical membrane-spanning segments follow: residues 14–34 (LLHILIPIFITQAGLSLITFL), 56–76 (LWTPVYTGLAGILMAVTPIVA), 97–117 (VAALLSIAVLVIGYAAVDLIL), 129–149 (IAKHFLGFLSLGIFPLFVYTV), 164–184 (MMITLSSLPINFVLNYVFIFG), 195–215 (GAGLASALTYWCICIISFFII), 244–264 (IGLPIGFAVFFETSIFAAVTL), 284–304 (ASLLYMLPLSVSMALTIVVGF), 319–339 (LIGIMMAIGFSLFTAACILLF), 360–380 (FLIYALFFQLSDAVAAPIQGA), 392–412 (AAAFVSYWVIGLPVGYMVGTF), and 417–437 (AFGYWIGLIAGLAAGAVGLFF).

The protein belongs to the multi antimicrobial extrusion (MATE) (TC 2.A.66.1) family.

The protein resides in the cell membrane. Its function is as follows. Multidrug efflux pump. This Bacillus subtilis (strain 168) protein is Probable multidrug resistance protein NorM (norM).